The following is a 452-amino-acid chain: Tubulin alpha-2/alpha-4 chain (452 aa).

Glutamine 11 contributes to the GTP binding site. Lysine 40 bears the N6-acetyllysine mark. Positions 71, 140, 144, 145, 179, 206, and 228 each coordinate GTP. Glutamate 71 is a binding site for Mg(2+). Residue glutamate 254 is part of the active site. The segment at 432–452 (YEEVGVDSVEGEGEEEGGEEY) is disordered.

Belongs to the tubulin family. Dimer of alpha and beta chains. A typical microtubule is a hollow water-filled tube with an outer diameter of 25 nm and an inner diameter of 15 nM. Alpha-beta heterodimers associate head-to-tail to form protofilaments running lengthwise along the microtubule wall with the beta-tubulin subunit facing the microtubule plus end conferring a structural polarity. Microtubules usually have 13 protofilaments but different protofilament numbers can be found in some organisms and specialized cells. Requires Mg(2+) as cofactor. In terms of processing, undergoes a tyrosination/detyrosination cycle, the cyclic removal and re-addition of a C-terminal tyrosine residue by the enzymes tubulin tyrosine carboxypeptidase (TTCP) and tubulin tyrosine ligase (TTL), respectively. Acetylation of alpha chains at Lys-40 stabilizes microtubules and affects affinity and processivity of microtubule motors. This modification has a role in multiple cellular functions, ranging from cell motility, cell cycle progression or cell differentiation to intracellular trafficking and signaling.

It is found in the cytoplasm. The protein resides in the cytoskeleton. It carries out the reaction GTP + H2O = GDP + phosphate + H(+). Its function is as follows. Tubulin is the major constituent of microtubules, a cylinder consisting of laterally associated linear protofilaments composed of alpha- and beta-tubulin heterodimers. Microtubules grow by the addition of GTP-tubulin dimers to the microtubule end, where a stabilizing cap forms. Below the cap, tubulin dimers are in GDP-bound state, owing to GTPase activity of alpha-tubulin. The chain is Tubulin alpha-2/alpha-4 chain (TUB2) from Patella vulgata (Common limpet).